The chain runs to 585 residues: Ankyrin repeat protein OPG003 (585 aa).

5 ANK repeats span residues 66 to 98 (CGMS…NFDN), 172 to 220 (DGLT…NINA), 224 to 256 (IGNT…DTRI), 297 to 333 (EGHH…QKDE), and 336 to 365 (NTMT…DINL). Residues 554–571 (LPPEIIRNIITKLSDYHL) are PRANC/F-box-like.

Belongs to the orthopoxvirus OPG003 family.

Functionally, may be involved in virus-host protein interaction through the ankyrin repeats and PRANC regions. This is Ankyrin repeat protein OPG003 (OPG003) from Homo sapiens (Human).